The sequence spans 333 residues: Transcription factor MYB94 (333 aa).

2 consecutive HTH myb-type domains span residues 9–65 and 66–116; these read KIGV…RPGI and KRGN…KKKL. 2 consecutive DNA-binding regions (H-T-H motif) follow at residues 37 to 61 and 89 to 112; these read WRSV…TNYL and WAAI…NTHL. Polar residues predominate over residues 134-154; sequence KDFSISNKNTTSHQSSNSSKG. 2 disordered regions span residues 134–157 and 183–218; these read KDFS…GQWE and PTNF…YPSG. Low complexity predominate over residues 196-209; the sequence is SSSSSSTTTTTTTT.

Expressed in germinating seeds, rosette and cauline leaves, flower buds, open flowers, stems and developing siliques.

The protein resides in the nucleus. In terms of biological role, transcription activator involved in the activation of cuticular wax biosynthesis under drought stress. Binds directly to the promoters of genes involved in cuticular wax biosynthesis. Transactivates WSD1, KCS2/DAISY, CER1, CER2, FAR3 and ECR genes. Functions together with MYB96 in the activation of cuticular wax biosynthesis. The chain is Transcription factor MYB94 from Arabidopsis thaliana (Mouse-ear cress).